We begin with the raw amino-acid sequence, 448 residues long: Bud neck protein 5 (448 aa).

Disordered stretches follow at residues 63–103, 171–211, and 242–352; these read SGND…DPSQ, DDEW…TLGG, and GDNE…SSPI. A phosphoserine mark is found at Ser-70 and Ser-179. The span at 171–180 shows a compositional bias: acidic residues; it reads DDEWEDEKSD. A compositionally biased stretch (basic and acidic residues) spans 181-191; it reads VEEGRVDKGTE. Ser-194 carries the phosphoserine modification. Residues 245 to 262 are compositionally biased toward basic and acidic residues; that stretch reads EYNHESSRLADQTPHDDN. Thr-257 carries the post-translational modification Phosphothreonine. The span at 264–281 shows a compositional bias: polar residues; that stretch reads ENCPNRSGGSTPLDSQTK. 2 positions are modified to phosphoserine: Ser-270 and Ser-273. Thr-274 carries the phosphothreonine modification. The segment covering 325 to 343 has biased composition (low complexity); the sequence is SVSSNSNSRNGSRKSSLNK. Residues Ser-332 and Ser-340 each carry the phosphoserine modification. Tyr-344 carries the phosphotyrosine modification. 2 positions are modified to phosphoserine: Ser-346 and Ser-350.

Component of the GIN4 complex composed of at least BNI5, CDC3, CDC10, CDC11, CDC12, GIN4, NAP1 and SHS1. Interacts directly with CDC11, CDC12 and SHS1.

The protein resides in the cytoplasm. It is found in the bud neck. Functionally, required for normal septin function and cytokinesis. Its recruitment to the bud neck by CDCd11 and SHS1 ensures efficient localization at the bud neck of MYO1, the type II myosin of the actomyosin contractile ring. This Saccharomyces cerevisiae (strain ATCC 204508 / S288c) (Baker's yeast) protein is Bud neck protein 5.